Here is a 169-residue protein sequence, read N- to C-terminus: Benzoate 1,2-dioxygenase subunit beta (169 aa).

It belongs to the bacterial ring-hydroxylating dioxygenase beta subunit family. As to quaternary structure, this dioxygenase system consists of three proteins: the two subunits of the hydroxylase (BenA and BenB), and an electron transfer component (BenC).

The enzyme catalyses benzoate + NADH + O2 + H(+) = (1R,6S)-1,6-dihydroxycyclohexa-2,4-diene-1-carboxylate + NAD(+). The protein operates within aromatic compound metabolism; benzoate degradation via hydroxylation; catechol from benzoate: step 1/2. Degradation of benzoate to 2-hydro-1,2-dihydroxybenzoate (DHB). The beta subunit may be responsible for the substrate specificity of the enzyme. The chain is Benzoate 1,2-dioxygenase subunit beta (benB) from Acinetobacter baylyi (strain ATCC 33305 / BD413 / ADP1).